Here is a 675-residue protein sequence, read N- to C-terminus: Secretogranin-1 (675 aa).

Positions Met-1–Ser-20 are cleaved as a signal peptide. An intrachain disulfide couples Cys-36 to Cys-57. Positions Ser-64–Ser-90 are enriched in basic and acidic residues. Disordered stretches follow at residues Ser-64–Thr-507 and Asn-528–Thr-555. Ser-93, Ser-99, Ser-100, Ser-129, and Ser-147 each carry phosphoserine. An O-linked (Xyl...) (chondroitin sulfate) serine glycan is attached at Ser-93. Composition is skewed to basic and acidic residues over residues Lys-148 to Lys-161 and Gly-168 to Glu-248. Ser-190 bears the Phosphoserine mark. A glycan (O-linked (Xyl...) (chondroitin sulfate) serine) is linked at Ser-236. Residues Pro-250–Ala-269 show a composition bias toward acidic residues. 5 positions are modified to phosphoserine: Ser-255, Ser-259, Ser-291, Ser-309, and Ser-333. The span at Tyr-292–Asp-311 shows a compositional bias: basic and acidic residues. Tyr-339 is modified (sulfotyrosine). Basic and acidic residues-rich tracts occupy residues Gly-361–Lys-410 and Ser-429–Lys-452. Phosphoserine is present on residues Ser-362, Ser-372, Ser-375, and Ser-397. Tyr-469 carries the post-translational modification Sulfotyrosine. Phosphoserine is present on residues Ser-490, Ser-529, and Ser-540. A Sulfotyrosine modification is found at Tyr-563. Residues Asp-620–Leu-646 are disordered. At Tyr-622 the chain carries Sulfotyrosine; partial. Position 624 is a phosphoserine (Ser-624). Over residues Glu-637–Leu-646 the composition is skewed to basic and acidic residues. The residue at position 674 (Arg-674) is an Arginine amide; in CCB peptide short form.

Belongs to the chromogranin/secretogranin protein family. In terms of assembly, interacts with ITPR1 in the secretory granules. Extensively processed in glucagonoma tissue by limited proteolysis at conserved basic residues. Alternative processing are seen in different tissues. The proglucagon-converting enzymes present in transformed alpha-cells are likely candidates to be involved in tissue-specific processing. Expressed in the brain, adrenal medulla and anterior pituitary. In the brain, localized to the hippocampal formation, the endocrine hypothalamus, the olfactory system, and in anatomically distinct structures in the pons-medulla.

Its subcellular location is the secreted. In terms of biological role, secretogranin-1 is a neuroendocrine secretory granule protein, which may be the precursor for other biologically active peptides. In Rattus norvegicus (Rat), this protein is Secretogranin-1 (Chgb).